Reading from the N-terminus, the 353-residue chain is Basic membrane protein C (353 aa).

Residues 1 to 16 (MFKRFIFITLSLLVFA) form the signal peptide. Cysteine 17 is lipidated: N-palmitoyl cysteine. A lipid anchor (S-diacylglycerol cysteine) is attached at cysteine 17.

This sequence belongs to the BMP lipoprotein family. Monomer.

It localises to the cell inner membrane. In terms of biological role, may be part of an ABC-type nucleoside uptake system involved in the purine salvage pathway. In Borreliella burgdorferi (strain ATCC 35210 / DSM 4680 / CIP 102532 / B31) (Borrelia burgdorferi), this protein is Basic membrane protein C (bmpC).